Consider the following 185-residue polypeptide: Peptidyl-tRNA hydrolase (185 aa).

Tyr-14 is a binding site for tRNA. His-19 serves as the catalytic Proton acceptor. The tRNA site is built by Phe-64, Asn-66, and Asn-112.

This sequence belongs to the PTH family. Monomer.

The protein resides in the cytoplasm. The catalysed reaction is an N-acyl-L-alpha-aminoacyl-tRNA + H2O = an N-acyl-L-amino acid + a tRNA + H(+). In terms of biological role, hydrolyzes ribosome-free peptidyl-tRNAs (with 1 or more amino acids incorporated), which drop off the ribosome during protein synthesis, or as a result of ribosome stalling. Functionally, catalyzes the release of premature peptidyl moieties from peptidyl-tRNA molecules trapped in stalled 50S ribosomal subunits, and thus maintains levels of free tRNAs and 50S ribosomes. In Caldanaerobacter subterraneus subsp. tengcongensis (strain DSM 15242 / JCM 11007 / NBRC 100824 / MB4) (Thermoanaerobacter tengcongensis), this protein is Peptidyl-tRNA hydrolase.